We begin with the raw amino-acid sequence, 149 residues long: Arginine repressor (149 aa).

It belongs to the ArgR family.

The protein resides in the cytoplasm. Its pathway is amino-acid biosynthesis; L-arginine biosynthesis [regulation]. Regulates arginine biosynthesis genes. This Chlorobaculum parvum (strain DSM 263 / NCIMB 8327) (Chlorobium vibrioforme subsp. thiosulfatophilum) protein is Arginine repressor.